A 531-amino-acid chain; its full sequence is Tubulin-folding cofactor E (531 aa).

The CAP-Gly domain occupies 32-76 (GDVEGYSGTWIGVDWDQDGDGKHNGSVNGVFYFNGRSQSSASFVR). LRR repeat units lie at residues 84–109 (ITLL…MYVL), 159–183 (LPNL…ALCE), 185–213 (LPAL…NIRV), 233–256 (LPGI…SSSD), 260–284 (FNSL…KLSQ), 285–308 (LPCL…VNGT), 318–342 (FPSL…ALNG), 344–366 (PQLV…GVPR), and 474–497 (VGKL…LFLQ).

It belongs to the TBCE family. In terms of assembly, supercomplex made of cofactors A to E. Cofactors A and D function by capturing and stabilizing tubulin in a quasi-native conformation. Cofactor E binds to the cofactor D-tubulin complex; interaction with cofactor C then causes the release of tubulin polypeptides that are committed to the native state.

The protein resides in the cytoplasm. In terms of biological role, essential tubulin-folding protein involved in the tubulin folding pathway. Not essential for cell viability. Probably involved in the binding of alpha-tubulin in the multimeric supercomplex. The protein is Tubulin-folding cofactor E (TFCE) of Arabidopsis thaliana (Mouse-ear cress).